We begin with the raw amino-acid sequence, 90 residues long: Putative defensin-like protein 243 (90 aa).

An N-terminal signal peptide occupies residues 1 to 19 (MKVEVIFLASCVLFSLIHA). 4 cysteine pairs are disulfide-bonded: Cys33–Cys88, Cys43–Cys72, Cys53–Cys82, and Cys70–Cys84.

It belongs to the DEFL family.

Its subcellular location is the secreted. This is Putative defensin-like protein 243 (SCRL9) from Arabidopsis thaliana (Mouse-ear cress).